The primary structure comprises 99 residues: Small ribosomal subunit protein eS24 (99 aa).

This sequence belongs to the eukaryotic ribosomal protein eS24 family.

This is Small ribosomal subunit protein eS24 from Methanothrix thermoacetophila (strain DSM 6194 / JCM 14653 / NBRC 101360 / PT) (Methanosaeta thermophila).